We begin with the raw amino-acid sequence, 282 residues long: Probable endonuclease 4 (282 aa).

The Zn(2+) site is built by His-71, His-111, Glu-147, Asp-181, His-184, His-218, Asp-231, His-233, and Glu-263.

Belongs to the AP endonuclease 2 family. It depends on Zn(2+) as a cofactor.

The enzyme catalyses Endonucleolytic cleavage to 5'-phosphooligonucleotide end-products.. Endonuclease IV plays a role in DNA repair. It cleaves phosphodiester bonds at apurinic or apyrimidinic (AP) sites, generating a 3'-hydroxyl group and a 5'-terminal sugar phosphate. The sequence is that of Probable endonuclease 4 from Protochlamydia amoebophila (strain UWE25).